The sequence spans 273 residues: Embryonic polyadenylate-binding protein 2 (273 aa).

The segment at 22–57 (SSDPEAQGWGAWGRTEKTSLVPRAGSRAGSDKEAEE) is disordered. Residues 143–220 (RSVFVGNVDY…RVIKVLPKRT (78 aa)) enclose the RRM domain.

The protein resides in the cytoplasm. In terms of biological role, binds the poly(A) tail of mRNA. The chain is Embryonic polyadenylate-binding protein 2 (Pabpn1l) from Mus musculus (Mouse).